Consider the following 303-residue polypeptide: Elongation factor Ts (303 aa).

The segment at 79 to 82 (TDFV) is involved in Mg(2+) ion dislocation from EF-Tu.

The protein belongs to the EF-Ts family.

It is found in the cytoplasm. In terms of biological role, associates with the EF-Tu.GDP complex and induces the exchange of GDP to GTP. It remains bound to the aminoacyl-tRNA.EF-Tu.GTP complex up to the GTP hydrolysis stage on the ribosome. The sequence is that of Elongation factor Ts from Syntrophotalea carbinolica (strain DSM 2380 / NBRC 103641 / GraBd1) (Pelobacter carbinolicus).